Here is a 202-residue protein sequence, read N- to C-terminus: Holliday junction branch migration complex subunit RuvA (202 aa).

Residues 1–64 form a domain I region; it reads MIDYVSGTLV…EDDESLYGFA (64 aa). Residues 65–143 form a domain II region; it reads TKAERTVFET…DLDVLEDTSP (79 aa). The flexible linker stretch occupies residues 144–149; sequence LSGGSD. The domain III stretch occupies residues 150–202; that stretch reads ARAEARADALEALTELGLSKADAERSIRQVLRDNAGIQSADELVRRALKADQE.

Belongs to the RuvA family. Homotetramer. Forms an RuvA(8)-RuvB(12)-Holliday junction (HJ) complex. HJ DNA is sandwiched between 2 RuvA tetramers; dsDNA enters through RuvA and exits via RuvB. An RuvB hexamer assembles on each DNA strand where it exits the tetramer. Each RuvB hexamer is contacted by two RuvA subunits (via domain III) on 2 adjacent RuvB subunits; this complex drives branch migration. In the full resolvosome a probable DNA-RuvA(4)-RuvB(12)-RuvC(2) complex forms which resolves the HJ.

It is found in the cytoplasm. In terms of biological role, the RuvA-RuvB-RuvC complex processes Holliday junction (HJ) DNA during genetic recombination and DNA repair, while the RuvA-RuvB complex plays an important role in the rescue of blocked DNA replication forks via replication fork reversal (RFR). RuvA specifically binds to HJ cruciform DNA, conferring on it an open structure. The RuvB hexamer acts as an ATP-dependent pump, pulling dsDNA into and through the RuvAB complex. HJ branch migration allows RuvC to scan DNA until it finds its consensus sequence, where it cleaves and resolves the cruciform DNA. The chain is Holliday junction branch migration complex subunit RuvA from Salinibacter ruber (strain DSM 13855 / M31).